The chain runs to 251 residues: Small ribosomal subunit protein uS3 (251 aa).

A KH type-2 domain is found at 39–112; that stretch reads IRKYINEVYA…NIILNVVEVR (74 aa). Residues 222–251 form a disordered region; it reads EEKKPAKKFNKKPVAAKPANKEEKSSKEVK. Over residues 240 to 251 the composition is skewed to basic and acidic residues; the sequence is ANKEEKSSKEVK.

This sequence belongs to the universal ribosomal protein uS3 family. Part of the 30S ribosomal subunit. Forms a tight complex with proteins S10 and S14.

In terms of biological role, binds the lower part of the 30S subunit head. Binds mRNA in the 70S ribosome, positioning it for translation. The protein is Small ribosomal subunit protein uS3 of Anaeroplasma abactoclasticum.